Consider the following 105-residue polypeptide: Large ribosomal subunit protein bL21 (105 aa).

It belongs to the bacterial ribosomal protein bL21 family. Part of the 50S ribosomal subunit. Contacts protein L20.

This protein binds to 23S rRNA in the presence of protein L20. The protein is Large ribosomal subunit protein bL21 of Rickettsia peacockii (strain Rustic).